The sequence spans 72 residues: uncharacterized protein (72 aa).

This is an uncharacterized protein from Archaeoglobus fulgidus (strain ATCC 49558 / DSM 4304 / JCM 9628 / NBRC 100126 / VC-16).